Consider the following 485-residue polypeptide: Signal recognition particle protein (485 aa).

Residues Gly-107–Thr-114, Asp-189–Arg-193, and Thr-247–Asp-250 contribute to the GTP site. The interval Gly-452 to Leu-485 is disordered. The span at Lys-471–Leu-485 shows a compositional bias: basic residues.

It belongs to the GTP-binding SRP family. SRP54 subfamily. Part of the signal recognition particle protein translocation system, which is composed of SRP and FtsY.

Its subcellular location is the cytoplasm. The enzyme catalyses GTP + H2O = GDP + phosphate + H(+). Functionally, involved in targeting and insertion of nascent membrane proteins into the cytoplasmic membrane. Binds to the hydrophobic signal sequence of the ribosome-nascent chain (RNC) as it emerges from the ribosomes. The SRP-RNC complex is then targeted to the cytoplasmic membrane where it interacts with the SRP receptor FtsY. This chain is Signal recognition particle protein, found in Synechococcus elongatus (strain ATCC 33912 / PCC 7942 / FACHB-805) (Anacystis nidulans R2).